Consider the following 341-residue polypeptide: MEPAFGEVNQLGGVFVNGRPLPNAIRLRIVELAQLGIRPCDISRQLRVSHGCVSKILARYNETGSILPGAIGGSKPRVTTPTVVKHIRTYKQRDPGIFAWEIRDRLLADGVCDKYNVPSVSSISRILRNKIGNLAQQGHYDSYKQHQPAPQPALPYNHIYSYPSPITAAAAKVPTPPGVPAIPGSVAMPRTWPSSHSVTDILGIRSITDQVSDSSPYHSPKVEEWSSLGRSNFPAAAPHAVNGLEKGALEQETKYGQAPNGLPAVGSFVSASSMAPYPTPAQVSPYMTYSAAPSGYVAGHGWQHAGSTPLSPHNCDIPASLAFKGMQAAREGSHSVTASAL.

The paired DNA-binding region spans alanine 4 to lysine 130. The tract at residues glutamate 7–threonine 63 is PAI subdomain. Positions threonine 82 to lysine 130 are RED subdomain. Positions alanine 168–proline 189 are interaction with KDM5B.

Interacts with KDM5B.

The protein localises to the nucleus. In terms of biological role, transcription factor required for normal development of thymus, parathyroid glands, ultimobranchial bodies, teeth, skeletal elements of skull and larynx as well as distal limbs. The chain is Paired box protein Pax-9 (PAX9) from Saimiri boliviensis boliviensis (Bolivian squirrel monkey).